The following is a 569-amino-acid chain: Urease subunit alpha (569 aa).

Positions 131 to 569 (GGFDAHIHFI…LPLAQRYFMY (439 aa)) constitute a Urease domain. Ni(2+) contacts are provided by His-136, His-138, and Lys-219. Residue Lys-219 is modified to N6-carboxylysine. Residue His-221 participates in substrate binding. Residues His-248 and His-274 each contribute to the Ni(2+) site. His-322 (proton donor) is an active-site residue. Asp-362 provides a ligand contact to Ni(2+).

This sequence belongs to the metallo-dependent hydrolases superfamily. Urease alpha subunit family. As to quaternary structure, heterotrimer of UreA (gamma), UreB (beta) and UreC (alpha) subunits. Three heterotrimers associate to form the active enzyme. It depends on Ni cation as a cofactor. Carboxylation allows a single lysine to coordinate two nickel ions.

Its subcellular location is the cytoplasm. The catalysed reaction is urea + 2 H2O + H(+) = hydrogencarbonate + 2 NH4(+). The protein operates within nitrogen metabolism; urea degradation; CO(2) and NH(3) from urea (urease route): step 1/1. The sequence is that of Urease subunit alpha from Jannaschia sp. (strain CCS1).